We begin with the raw amino-acid sequence, 212 residues long: Large ribosomal subunit protein uL1 (212 aa).

The protein belongs to the universal ribosomal protein uL1 family. In terms of assembly, part of the 50S ribosomal subunit.

Functionally, binds directly to 23S rRNA. Probably involved in E site tRNA release. In terms of biological role, protein L1 is also a translational repressor protein, it controls the translation of its operon by binding to its mRNA. In Halobacterium salinarum (strain ATCC 29341 / DSM 671 / R1), this protein is Large ribosomal subunit protein uL1.